The chain runs to 254 residues: D-aminoacyl-tRNA deacylase (254 aa).

The protein belongs to the DtdA deacylase family. Monomer. The cofactor is Zn(2+).

It carries out the reaction a D-aminoacyl-tRNA + H2O = a tRNA + a D-alpha-amino acid + H(+). The enzyme catalyses glycyl-tRNA(Ala) + H2O = tRNA(Ala) + glycine + H(+). In terms of biological role, D-aminoacyl-tRNA deacylase with broad substrate specificity. By recycling D-aminoacyl-tRNA to D-amino acids and free tRNA molecules, this enzyme counteracts the toxicity associated with the formation of D-aminoacyl-tRNA entities in vivo. This is D-aminoacyl-tRNA deacylase from Methanococcus vannielii (strain ATCC 35089 / DSM 1224 / JCM 13029 / OCM 148 / SB).